The following is a 192-amino-acid chain: ADP-ribose glycohydrolase AF_1521 (192 aa).

In terms of domain architecture, Macro spans 1 to 192 (MEVLFEAKVG…VALKVFERSL (192 aa)). Residues 19–21 (GDI), 32–34 (AAN), 39–44 (HGGGVA), and 140–146 (VSAGIYG) contribute to the substrate site.

The catalysed reaction is 5-O-(ADP-D-ribosyl)-L-glutamyl-[protein] + H2O = L-glutamyl-[protein] + ADP-D-ribose + H(+). The enzyme catalyses 4-O-(ADP-D-ribosyl)-L-aspartyl-[protein] + H2O = L-aspartyl-[protein] + ADP-D-ribose + H(+). It catalyses the reaction alpha-NAD(+) + H2O = ADP-D-ribose + nicotinamide + H(+). Removes ADP-ribose from aspartate and glutamate residues in proteins bearing a single ADP-ribose moiety. Inactive towards proteins bearing poly-ADP-ribose. Catalyzes removal of a phosphate group from ADP-ribose 1''-phosphate (Appr1p), but with low efficiency. In Archaeoglobus fulgidus (strain ATCC 49558 / DSM 4304 / JCM 9628 / NBRC 100126 / VC-16), this protein is ADP-ribose glycohydrolase AF_1521.